A 142-amino-acid chain; its full sequence is Hemoglobin subunit alpha (142 aa).

The Globin domain occupies 2–142; the sequence is VLSSADKNNV…VSTVLTSKYR (141 aa). The residue at position 4 (Ser4) is a Phosphoserine. Residues Lys8 and Lys12 each carry the N6-succinyllysine modification. Lys17 carries the post-translational modification N6-acetyllysine; alternate. N6-succinyllysine; alternate is present on Lys17. The residue at position 25 (Tyr25) is a Phosphotyrosine. Ser36 is modified (phosphoserine). N6-succinyllysine is present on Lys41. Position 50 is a phosphoserine (Ser50). An O2-binding site is contributed by His59. His88 contacts heme b. Position 103 is a phosphoserine (Ser103). Thr109 is subject to Phosphothreonine. Residue Ser125 is modified to Phosphoserine. Phosphothreonine is present on residues Thr135 and Thr138. Ser139 carries the phosphoserine modification.

The protein belongs to the globin family. As to quaternary structure, heterotetramer of two alpha chains and two beta chains. Red blood cells.

Its function is as follows. Involved in oxygen transport from the lung to the various peripheral tissues. Hemopressin acts as an antagonist peptide of the cannabinoid receptor CNR1. Hemopressin-binding efficiently blocks cannabinoid receptor CNR1 and subsequent signaling. This chain is Hemoglobin subunit alpha (HBA), found in Panthera onca (Jaguar).